Reading from the N-terminus, the 96-residue chain is Nucleoid-associated protein DR_0199 (96 aa).

Belongs to the YbaB/EbfC family. Homodimer.

It localises to the cytoplasm. The protein resides in the nucleoid. Binds to DNA and alters its conformation. May be involved in regulation of gene expression, nucleoid organization and DNA protection. The chain is Nucleoid-associated protein DR_0199 from Deinococcus radiodurans (strain ATCC 13939 / DSM 20539 / JCM 16871 / CCUG 27074 / LMG 4051 / NBRC 15346 / NCIMB 9279 / VKM B-1422 / R1).